The sequence spans 473 residues: tRNA-2-methylthio-N(6)-dimethylallyladenosine synthase (473 aa).

Residues 5 to 125 (RKLHIKSFGC…LPQLLAEAAR (121 aa)) enclose the MTTase N-terminal domain. C14, C50, C88, C166, C170, and C173 together coordinate [4Fe-4S] cluster. The Radical SAM core domain maps to 152-384 (RARGISAFVT…QELIDSQQAA (233 aa)). In terms of domain architecture, TRAM spans 387–449 (AAVIGTTVEV…RYSLIGELAA (63 aa)). The segment at 452–473 (QHSGFATRSEDSPQSLPITTGA) is disordered.

Belongs to the methylthiotransferase family. MiaB subfamily. In terms of assembly, monomer. Requires [4Fe-4S] cluster as cofactor.

The protein resides in the cytoplasm. The enzyme catalyses N(6)-dimethylallyladenosine(37) in tRNA + (sulfur carrier)-SH + AH2 + 2 S-adenosyl-L-methionine = 2-methylsulfanyl-N(6)-dimethylallyladenosine(37) in tRNA + (sulfur carrier)-H + 5'-deoxyadenosine + L-methionine + A + S-adenosyl-L-homocysteine + 2 H(+). Functionally, catalyzes the methylthiolation of N6-(dimethylallyl)adenosine (i(6)A), leading to the formation of 2-methylthio-N6-(dimethylallyl)adenosine (ms(2)i(6)A) at position 37 in tRNAs that read codons beginning with uridine. In Rhodopseudomonas palustris (strain BisB18), this protein is tRNA-2-methylthio-N(6)-dimethylallyladenosine synthase.